The following is a 91-amino-acid chain: Probable Fe(2+)-trafficking protein (91 aa).

Belongs to the Fe(2+)-trafficking protein family. Monomer.

Its function is as follows. Could be a mediator in iron transactions between iron acquisition and iron-requiring processes, such as synthesis and/or repair of Fe-S clusters in biosynthetic enzymes. This chain is Probable Fe(2+)-trafficking protein, found in Klebsiella pneumoniae (strain 342).